The primary structure comprises 842 residues: Oligopeptide transporter phomP2' (842 aa).

The disordered stretch occupies residues 1 to 58; sequence MEADPKVPFTDEMNIQDEHNWESGSWSSSRRSNDSNVTLLSRRSSVEQHEDERQKDSD. The span at 23-36 shows a compositional bias: low complexity; that stretch reads SGSWSSSRRSNDSN. N-linked (GlcNAc...) asparagine glycans are attached at residues N33 and N36. Residues 44 to 58 are compositionally biased toward basic and acidic residues; that stretch reads SSVEQHEDERQKDSD. The next 6 helical transmembrane spans lie at 105–125, 177–197, 210–230, 268–288, 315–335, and 345–365; these read VWLL…VYYF, ALVV…GPLS, PWAI…VGLY, VFMA…FVFP, GFGL…SPLF, and FVGA…SDAL. N386 and N398 each carry an N-linked (GlcNAc...) asparagine glycan. Helical transmembrane passes span 415–435, 478–498, 505–525, and 585–605; these read AMHF…AVLF, AWYA…LYAG, WGLQ…GMLF, and WELL…NWAV. The span at 629–649 shows a compositional bias: gly residues; that stretch reads QGLGLGQGGGGGGGGGGGGGQ. The segment at 629–657 is disordered; sequence QGLGLGQGGGGGGGGGGGGGQQQRAAGAH. The next 3 membrane-spanning stretches (helical) occupy residues 668 to 688, 700 to 720, and 731 to 751; these read NFFS…FGGG, WLLP…WLIH, and WPLH…FPTT. A glycan (N-linked (GlcNAc...) asparagine) is linked at N752. A helical transmembrane segment spans residues 784 to 804; sequence AGLDCGAQLVQMVLGLAFLVF.

Belongs to the oligopeptide OPT transporter family.

It localises to the membrane. In terms of biological role, oligopeptide transporter; part of the gene cluster that mediates the biosynthesis of the phomopsins, a group of hexapeptide mycotoxins which infects lupins and causes lupinosis disease in livestock. This Diaporthe leptostromiformis (Lupinosis disease fungus) protein is Oligopeptide transporter phomP2'.